Reading from the N-terminus, the 317-residue chain is Signal recognition particle receptor FtsY (317 aa).

Residues 117-124, 199-203, and 263-266 each bind GTP; these read GVNGVGKT, DTAGR, and TKLD.

The protein belongs to the GTP-binding SRP family. FtsY subfamily. Part of the signal recognition particle protein translocation system, which is composed of SRP and FtsY.

It localises to the cell membrane. The protein localises to the cytoplasm. It catalyses the reaction GTP + H2O = GDP + phosphate + H(+). Functionally, involved in targeting and insertion of nascent membrane proteins into the cytoplasmic membrane. Acts as a receptor for the complex formed by the signal recognition particle (SRP) and the ribosome-nascent chain (RNC). The polypeptide is Signal recognition particle receptor FtsY (Deinococcus radiodurans (strain ATCC 13939 / DSM 20539 / JCM 16871 / CCUG 27074 / LMG 4051 / NBRC 15346 / NCIMB 9279 / VKM B-1422 / R1)).